A 3582-amino-acid polypeptide reads, in one-letter code: Ubiquitin carboxyl-terminal hydrolase 34 (3582 aa).

Phosphoserine is present on residues Ser-352, Ser-486, Ser-487, and Ser-490. Disordered stretches follow at residues 503–533, 551–670, 682–705, 775–801, and 1496–1515; these read EEEE…HQSG, QQRL…ELRN, GESQ…VFNT, HHHH…DGHM, and TGSY…DQVE. The segment covering 510-524 has biased composition (low complexity); it reads AAPSPWSPAASPQSS. The segment covering 560 to 570 has biased composition (polar residues); it reads SMQGSSDETAN. The segment covering 571–590 has biased composition (low complexity); the sequence is SGEDGSSGPGSSSGHSDGSS. Over residues 591–609 the composition is skewed to polar residues; sequence NEVNSSHASQSAGSPGSEV. Acidic residues predominate over residues 610–653; that stretch reads QSEDIADIEALKEEEEEEEEEEEEEEEEDDEEEEDEEEDDDDDD. Residues 684–697 show a composition bias toward polar residues; that stretch reads SQGTSERNGTNSGT. Positions 775–798 are enriched in basic residues; sequence HHHHHHHHHHHHHHHHHHHHHHHD. Residues 1504-1514 show a composition bias toward acidic residues; it reads PDSDDSSEDQV. Phosphoserine is present on Ser-1506. The USP domain maps to 1931-2276; it reads VGLTNLGATC…SAYMLFYKRM (346 aa). The active-site Nucleophile is Cys-1940. His-2201 functions as the Proton acceptor in the catalytic mechanism. Ser-2525 is subject to Phosphoserine. A disordered region spans residues 3369–3484; it reads SLQEQEAKER…QSNNGRFDDC (116 aa). A compositionally biased stretch (basic and acidic residues) spans 3373-3384; the sequence is QEAKERKTKDDE. 2 positions are modified to phosphoserine: Ser-3395 and Ser-3396. Thr-3418 is subject to Phosphothreonine. Phosphoserine is present on residues Ser-3423 and Ser-3443. The segment covering 3463 to 3484 has biased composition (basic and acidic residues); the sequence is DGSHIRSQHAEEQSNNGRFDDC. Position 3539 is a phosphoserine (Ser-3539).

It belongs to the peptidase C19 family. Interacts with AXIN1 and AXIN2.

The catalysed reaction is Thiol-dependent hydrolysis of ester, thioester, amide, peptide and isopeptide bonds formed by the C-terminal Gly of ubiquitin (a 76-residue protein attached to proteins as an intracellular targeting signal).. Its function is as follows. Ubiquitin hydrolase that can remove conjugated ubiquitin from AXIN1 and AXIN2, thereby acting as a regulator of Wnt signaling pathway. Acts as an activator of the Wnt signaling pathway downstream of the beta-catenin destruction complex by deubiquitinating and stabilizing AXIN1 and AXIN2, leading to promote nuclear accumulation of AXIN1 and AXIN2 and positively regulate beta-catenin (CTNBB1)-mediated transcription. Recognizes and hydrolyzes the peptide bond at the C-terminal Gly of ubiquitin. Involved in the processing of poly-ubiquitin precursors as well as that of ubiquitinated proteins. The polypeptide is Ubiquitin carboxyl-terminal hydrolase 34 (Usp34) (Mus musculus (Mouse)).